We begin with the raw amino-acid sequence, 400 residues long: MLPRALLLSFCAAALQLVSSKRDLVLVKEALSWYDAQQHCRLHYTDLADLQPSGLWKLYSLMTSTPAWIGLFFDASTSGLRWSSGSTFTALEWGQKLPEFGVGFCATLYTWLKLPSIGAASCTAQKPFLCYCDPDVGHLISTKPSLSLTTSPKPAVVQISGQTFMRFDQVMTWSSALLYCRSHHTDLADLQMVTDETGKEALRSIMSETEAWIGLYLNANSGSLSWSSDLGASIPSWLQVPMMVRGLCTALGIYMTYSPKVYSVNCSSLLPFFCFYDSSTGHRASAELPPLFHTSPTEMTEETTPRPGRAVASVGSGTDRRDTAAATEAQHLSSESKEKTSAQKSGHPFGILKADFTISTLMDPEEMKDQFLRQIQEVLKLTLGHEQFRLKWVSFEVNKK.

Residues 1–20 (MLPRALLLSFCAAALQLVSS) form the signal peptide. C-type lectin domains lie at 26–131 (LVKE…FLCY) and 159–275 (ISGQ…FFCF). Cystine bridges form between Cys-40/Cys-130, Cys-105/Cys-122, Cys-180/Cys-274, and Cys-248/Cys-266. A disordered region spans residues 287-346 (ELPPLFHTSPTEMTEETTPRPGRAVASVGSGTDRRDTAAATEAQHLSSESKEKTSAQKSG).

This is Putative C-type lectin domain family 20 member A from Homo sapiens (Human).